The sequence spans 372 residues: Glutamate 5-kinase (372 aa).

Residue lysine 14 coordinates ATP. The substrate site is built by serine 54, aspartate 141, and asparagine 153. 173 to 174 lines the ATP pocket; that stretch reads TD. Residues 280–358 form the PUA domain; that stretch reads RGHVVIDAGA…GEIETVLGYM (79 aa).

Belongs to the glutamate 5-kinase family.

The protein resides in the cytoplasm. It carries out the reaction L-glutamate + ATP = L-glutamyl 5-phosphate + ADP. The protein operates within amino-acid biosynthesis; L-proline biosynthesis; L-glutamate 5-semialdehyde from L-glutamate: step 1/2. Functionally, catalyzes the transfer of a phosphate group to glutamate to form L-glutamate 5-phosphate. The chain is Glutamate 5-kinase from Burkholderia ambifaria (strain ATCC BAA-244 / DSM 16087 / CCUG 44356 / LMG 19182 / AMMD) (Burkholderia cepacia (strain AMMD)).